The following is a 344-amino-acid chain: Lipase chaperone (344 aa).

A helical transmembrane segment spans residues 14–34; the sequence is AAIYGVVGLAAIAGVAMWSGA.

It belongs to the lipase chaperone family.

It localises to the cell inner membrane. Its function is as follows. May be involved in the folding of the extracellular lipase during its passage through the periplasm. The protein is Lipase chaperone of Burkholderia cenocepacia (strain HI2424).